Consider the following 905-residue polypeptide: Lateral signaling target protein 2 homolog (905 aa).

A Glycyl lysine isopeptide (Lys-Gly) (interchain with G-Cter in ubiquitin) cross-link involves residue K87. S334 carries the phosphoserine modification. Residues D354 to V441 are disordered. Composition is skewed to polar residues over residues S358 to Q367 and P418 to Q437. Phosphothreonine is present on T512. Disordered regions lie at residues N516–H552 and P589–V691. 2 stretches are compositionally biased toward basic and acidic residues: residues P542 to H552 and G605 to E615. Residues S647–R656 show a composition bias toward polar residues. Basic and acidic residues predominate over residues G659–K678. Residues D835–V895 form an FYVE-type zinc finger. Zn(2+) contacts are provided by C841, C844, C857, C860, C865, C868, and C887. Residue T888 is modified to Phosphothreonine; by MAP2K. Position 890 (C890) interacts with Zn(2+).

This sequence belongs to the lst-2 family. Interacts with TRIM3. In terms of processing, monoubiquitination at Lys-87 prevents binding to phosphatidylinositol 3-phosphate (PI3P) and localization to early endosome membranes. In terms of tissue distribution, enriched in brain (at protein level).

It localises to the cytoplasm. Its subcellular location is the cytosol. The protein resides in the early endosome membrane. Negative regulator of epidermal growth factor receptor (EGFR) signaling. Acts by promoting EGFR degradation in endosomes when not monoubiquitinated. This is Lateral signaling target protein 2 homolog (Zfyve28) from Mus musculus (Mouse).